A 77-amino-acid polypeptide reads, in one-letter code: Acyl carrier protein (77 aa).

The 76-residue stretch at 2-77 (ADVLERVTKI…DAVTYIESHL (76 aa)) folds into the Carrier domain. Position 37 is an O-(pantetheine 4'-phosphoryl)serine (S37).

The protein belongs to the acyl carrier protein (ACP) family. In terms of processing, 4'-phosphopantetheine is transferred from CoA to a specific serine of apo-ACP by AcpS. This modification is essential for activity because fatty acids are bound in thioester linkage to the sulfhydryl of the prosthetic group.

The protein resides in the cytoplasm. The protein operates within lipid metabolism; fatty acid biosynthesis. Its function is as follows. Carrier of the growing fatty acid chain in fatty acid biosynthesis. This chain is Acyl carrier protein, found in Bacillus anthracis (strain A0248).